Reading from the N-terminus, the 294-residue chain is Nucleotide-binding protein lp_0779 (294 aa).

12–19 (GMSGAGKT) lines the ATP pocket. 62–65 (DLRS) is a binding site for GTP.

The protein belongs to the RapZ-like family.

In terms of biological role, displays ATPase and GTPase activities. This chain is Nucleotide-binding protein lp_0779, found in Lactiplantibacillus plantarum (strain ATCC BAA-793 / NCIMB 8826 / WCFS1) (Lactobacillus plantarum).